The sequence spans 1009 residues: Protein-tyrosine kinase 2-beta (1009 aa).

The 321-residue stretch at 39–359 (RILKVCFYSN…GYCRLQGEHK (321 aa)) folds into the FERM domain. Residues serine 361, serine 375, and serine 399 each carry the phosphoserine modification. At tyrosine 402 the chain carries Phosphotyrosine; by autocatalysis. The Protein kinase domain occupies 425–683 (VVLNRILGEG…ELVCSLSDIY (259 aa)). Residues 431 to 439 (LGEGFFGEV), lysine 457, and 503 to 509 (ELYPYGE) contribute to the ATP site. Aspartate 549 (proton acceptor) is an active-site residue. Tyrosine 579 is modified (phosphotyrosine). The residue at position 580 (tyrosine 580) is a Phosphotyrosine; by SRC, FYN and LCK. Residues 696-728 (NARYRPPKILEPTTFQEPPPKPSRPKYRPPPQT) are disordered. Over residues 712 to 727 (EPPPKPSRPKYRPPPQ) the composition is skewed to pro residues. Tyrosine 722 bears the Phosphotyrosine mark. Serine 762 carries the phosphoserine modification. Threonine 765 carries the phosphothreonine modification. An interaction with TGFB1I1 region spans residues 801–1009 (KIKMKQVLER…VANLAHPPAE (209 aa)). Tyrosine 834 bears the Phosphotyrosine mark. The residue at position 839 (serine 839) is a Phosphoserine. At threonine 842 the chain carries Phosphothreonine. Phosphotyrosine is present on tyrosine 849. Serine 866 carries the post-translational modification Phosphoserine. Residues 868 to 1009 (QPTANLDRTD…VANLAHPPAE (142 aa)) are focal adhesion targeting (FAT). Tyrosine 881 carries the post-translational modification Phosphotyrosine.

Belongs to the protein kinase superfamily. Tyr protein kinase family. FAK subfamily. In terms of assembly, homodimer, or homooligomer. Interacts with KCNA2. Interacts with NPHP1, ASAP1, ASAP2, ARHGAP26, SKAP2 and TGFB1I1. The Tyr-402 phosphorylated form interacts with SRC (via SH2 domain) and SRC family members. Forms a signaling complex with EPHA1, LCK and phosphatidylinositol 3-kinase; upon activation by EFNA1. Interacts with GRB2 (via SH2 domain). Interacts with P53/TP53 and MDM2. Interacts with MYLK. Interacts with BCAR1. Interacts with RB1CC1. Interacts with RHOU. Interacts with VAV1. Interacts with PDPK1. Interacts with DLG4. Interacts with LPXN and PTPN12. Interacts with SIRPA and SH2D3C. Interacts (hypophosphorylated) with PXN. Interacts with ARHGAP10. In terms of processing, phosphorylated on tyrosine residues in response to various stimuli that elevate the intracellular calcium concentration; this activation is indirect and may be mediated by production of reactive oxygen species (ROS). Tyr-402 is the major autophosphorylation site, but other kinases can also phosphorylate Tyr-402. Autophosphorylation occurs in trans, i.e. one subunit of the dimeric receptor phosphorylates tyrosine residues on the other subunit. Phosphorylation at Tyr-402 promotes interaction with SRC and SRC family members, leading to phosphorylation at Tyr-579; Tyr-580 and Tyr-881. Phosphorylation at Tyr-881 is important for interaction with GRB2. Phosphorylated on tyrosine residues upon activation of FGR and PKC. Recruitment by NPHP1 to cell matrix adhesions initiates Tyr-402 phosphorylation. In monocytes, adherence to substrata is required for tyrosine phosphorylation and kinase activation. Angiotensin II, thapsigargin and L-alpha-lysophosphatidic acid (LPA) also induce autophosphorylation and increase kinase activity. Phosphorylation by MYLK promotes ITGB2 activation and is thus essential to trigger neutrophil transmigration during lung injury. Dephosphorylated by PTPN12.

The protein resides in the cytoplasm. The protein localises to the perinuclear region. Its subcellular location is the cell membrane. It localises to the cell junction. It is found in the focal adhesion. The protein resides in the cell projection. The protein localises to the lamellipodium. Its subcellular location is the cell cortex. It localises to the nucleus. The enzyme catalyses L-tyrosyl-[protein] + ATP = O-phospho-L-tyrosyl-[protein] + ADP + H(+). With respect to regulation, activated in response to stimuli that lead to increased intracellular Ca(2+) levels; this activation is indirect and may be mediated by calcium-mediated production of reactive oxygen species (ROS). Activated by autophosphorylation at Tyr-402; this creates a binding site for SRC family kinases and leads to phosphorylation at additional tyrosine residues. Phosphorylation at Tyr-402, Tyr-579 and Tyr-580 is required for optimal kinase activity. Non-receptor protein-tyrosine kinase that regulates reorganization of the actin cytoskeleton, cell polarization, cell migration, adhesion, spreading and bone remodeling. Plays a role in the regulation of the humoral immune response, and is required for normal levels of marginal B-cells in the spleen and normal migration of splenic B-cells. Required for normal macrophage polarization and migration towards sites of inflammation. Regulates cytoskeleton rearrangement and cell spreading in T-cells, and contributes to the regulation of T-cell responses. Promotes osteoclastic bone resorption; this requires both PTK2B/PYK2 and SRC. May inhibit differentiation and activity of osteoprogenitor cells. Functions in signaling downstream of integrin and collagen receptors, immune receptors, G-protein coupled receptors (GPCR), cytokine, chemokine and growth factor receptors, and mediates responses to cellular stress. Forms multisubunit signaling complexes with SRC and SRC family members upon activation; this leads to the phosphorylation of additional tyrosine residues, creating binding sites for scaffold proteins, effectors and substrates. Regulates numerous signaling pathways. Promotes activation of phosphatidylinositol 3-kinase and of the AKT1 signaling cascade. Promotes activation of NOS3. Regulates production of the cellular messenger cGMP. Promotes activation of the MAP kinase signaling cascade, including activation of MAPK1/ERK2, MAPK3/ERK1 and MAPK8/JNK1. Promotes activation of Rho family GTPases, such as RHOA and RAC1. Recruits the ubiquitin ligase MDM2 to P53/TP53 in the nucleus, and thereby regulates P53/TP53 activity, P53/TP53 ubiquitination and proteasomal degradation. Acts as a scaffold, binding to both PDPK1 and SRC, thereby allowing SRC to phosphorylate PDPK1 at 'Tyr-9, 'Tyr-373', and 'Tyr-376'. Promotes phosphorylation of NMDA receptors by SRC family members, and thereby contributes to the regulation of NMDA receptor ion channel activity and intracellular Ca(2+) levels. May also regulate potassium ion transport by phosphorylation of potassium channel subunits. Phosphorylates SRC; this increases SRC kinase activity. Phosphorylates ASAP1, NPHP1, KCNA2 and SHC1. Promotes phosphorylation of ASAP2, RHOU and PXN; this requires both SRC and PTK2/PYK2. This Mus musculus (Mouse) protein is Protein-tyrosine kinase 2-beta (Ptk2b).